The following is a 202-amino-acid chain: LexA repressor (202 aa).

The H-T-H motif DNA-binding region spans 28-48 (RAEIAQRLGFRSPNAAEEHLK). Residues S119 and K156 each act as for autocatalytic cleavage activity in the active site.

Belongs to the peptidase S24 family. As to quaternary structure, homodimer.

It carries out the reaction Hydrolysis of Ala-|-Gly bond in repressor LexA.. Represses a number of genes involved in the response to DNA damage (SOS response), including recA and lexA. Binds to the 16 bp palindromic sequence 5'-CTGTATATATATACAG-3'. In the presence of single-stranded DNA, RecA interacts with LexA causing an autocatalytic cleavage which disrupts the DNA-binding part of LexA, leading to derepression of the SOS regulon and eventually DNA repair. The protein is LexA repressor of Cronobacter sakazakii (strain ATCC BAA-894) (Enterobacter sakazakii).